Reading from the N-terminus, the 434-residue chain is ATP-dependent protease ATPase subunit HslU (434 aa).

Residues Val18, 60–65 (GVGKTE), Asp247, Glu312, and Arg384 each bind ATP.

The protein belongs to the ClpX chaperone family. HslU subfamily. As to quaternary structure, a double ring-shaped homohexamer of HslV is capped on each side by a ring-shaped HslU homohexamer. The assembly of the HslU/HslV complex is dependent on binding of ATP.

It localises to the cytoplasm. ATPase subunit of a proteasome-like degradation complex; this subunit has chaperone activity. The binding of ATP and its subsequent hydrolysis by HslU are essential for unfolding of protein substrates subsequently hydrolyzed by HslV. HslU recognizes the N-terminal part of its protein substrates and unfolds these before they are guided to HslV for hydrolysis. This is ATP-dependent protease ATPase subunit HslU from Bradyrhizobium sp. (strain BTAi1 / ATCC BAA-1182).